The primary structure comprises 440 residues: 23S rRNA (uracil(1939)-C(5))-methyltransferase RlmD (440 aa).

The 62-residue stretch at 8–69 (PQKINKLQRE…RQFGLATTKK (62 aa)) folds into the TRAM domain. Positions 82, 88, 91, and 169 each coordinate [4Fe-4S] cluster. The S-adenosyl-L-methionine site is built by Gln-272, Phe-301, Asn-306, Glu-322, Asp-349, and Asp-370. Catalysis depends on Cys-396, which acts as the Nucleophile.

This sequence belongs to the class I-like SAM-binding methyltransferase superfamily. RNA M5U methyltransferase family. RlmD subfamily.

It carries out the reaction uridine(1939) in 23S rRNA + S-adenosyl-L-methionine = 5-methyluridine(1939) in 23S rRNA + S-adenosyl-L-homocysteine + H(+). Catalyzes the formation of 5-methyl-uridine at position 1939 (m5U1939) in 23S rRNA. This chain is 23S rRNA (uracil(1939)-C(5))-methyltransferase RlmD, found in Mannheimia succiniciproducens (strain KCTC 0769BP / MBEL55E).